The chain runs to 187 residues: Elongation factor P (187 aa).

It belongs to the elongation factor P family.

Its subcellular location is the cytoplasm. The protein operates within protein biosynthesis; polypeptide chain elongation. Involved in peptide bond synthesis. Stimulates efficient translation and peptide-bond synthesis on native or reconstituted 70S ribosomes in vitro. Probably functions indirectly by altering the affinity of the ribosome for aminoacyl-tRNA, thus increasing their reactivity as acceptors for peptidyl transferase. The chain is Elongation factor P from Tolumonas auensis (strain DSM 9187 / NBRC 110442 / TA 4).